Reading from the N-terminus, the 1173-residue chain is Tectonin beta-propeller repeat-containing protein 1 (1173 aa).

TECPR repeat units lie at residues 209–240 (LSVW…TELE), 254–285 (DLLW…TIVE), 301–332 (NVVW…IEMV), and 344–376 (DQVF…KSIV). A disordered region spans residues 403 to 489 (IKEHSDSPIP…AGPVPKAGAP (87 aa)). The segment covering 409-422 (SPIPSDIESSSEPE) has biased composition (low complexity). Positions 424–434 (SAVQENSSDSS) are enriched in polar residues. A PH domain is found at 609-718 (VWVKTGALQW…WLVLLSMSCY (110 aa)). TECPR repeat units lie at residues 730–757 (QAIW…TNGR), 952–983 (IALW…LHVG), 997–1028 (LQVW…YHIP), 1043–1074 (TSVF…EHMS), and 1086–1126 (DQIW…DYGI). Residues 1147-1173 (QPKENATEKPDPQEENGESAFSHIANC) are disordered.

Belongs to the TECPR1 family.

It is found in the cytoplasmic vesicle. The protein resides in the autophagosome membrane. The protein localises to the lysosome membrane. In terms of biological role, tethering factor involved in autophagy. Involved in autophagosome maturation by promoting the autophagosome fusion with lysosomes. Binds phosphatidylinositol-3-phosphate (PtdIns(3)P) present at the surface of autophagosomes. The sequence is that of Tectonin beta-propeller repeat-containing protein 1 (tecpr1) from Xenopus tropicalis (Western clawed frog).